A 274-amino-acid polypeptide reads, in one-letter code: Hydroxyethylthiazole kinase (274 aa).

Met-50 serves as a coordination point for substrate. ATP is bound by residues Arg-126 and Ser-171. Substrate is bound at residue Ala-200.

Belongs to the Thz kinase family. Requires Mg(2+) as cofactor.

The catalysed reaction is 5-(2-hydroxyethyl)-4-methylthiazole + ATP = 4-methyl-5-(2-phosphooxyethyl)-thiazole + ADP + H(+). Its pathway is cofactor biosynthesis; thiamine diphosphate biosynthesis; 4-methyl-5-(2-phosphoethyl)-thiazole from 5-(2-hydroxyethyl)-4-methylthiazole: step 1/1. Catalyzes the phosphorylation of the hydroxyl group of 4-methyl-5-beta-hydroxyethylthiazole (THZ). The polypeptide is Hydroxyethylthiazole kinase (Acinetobacter baylyi (strain ATCC 33305 / BD413 / ADP1)).